The following is a 245-amino-acid chain: Ribonuclease 3 (245 aa).

Residues 17–146 (FAKKMNELGF…FVGALYLDQG (130 aa)) form the RNase III domain. Glutamate 59 contacts Mg(2+). The active site involves aspartate 63. Residues aspartate 132 and glutamate 135 each contribute to the Mg(2+) site. Residue glutamate 135 is part of the active site. The region spanning 172–241 (DFKTQFQEYV…AESAYSKLKS (70 aa)) is the DRBM domain. The disordered stretch occupies residues 217-245 (ATGQGKTKKESEQKAAESAYSKLKSNNNL).

This sequence belongs to the ribonuclease III family. Homodimer. The cofactor is Mg(2+).

The protein resides in the cytoplasm. It carries out the reaction Endonucleolytic cleavage to 5'-phosphomonoester.. Digests double-stranded RNA. Involved in the processing of primary rRNA transcript to yield the immediate precursors to the large and small rRNAs (23S and 16S). Processes some mRNAs, and tRNAs when they are encoded in the rRNA operon. Processes pre-crRNA and tracrRNA of type II CRISPR loci if present in the organism. This chain is Ribonuclease 3, found in Staphylococcus haemolyticus (strain JCSC1435).